A 266-amino-acid polypeptide reads, in one-letter code: Luciferase (266 aa).

Residues 22 to 41 form a helical membrane-spanning segment; it reads GLAVTCCAVAVASIIAFPYI.

It belongs to the fungal luciferase family.

The protein localises to the membrane. It catalyses the reaction 3-hydroxyhispidin + O2 = (E)-caffeoylpyruvate + hnu + CO2. It carries out the reaction 3-hydroxyhispidin + O2 = 4-[(E)-2-(3,4-dihydroxyphenyl)ethenyl]-1,7-dihydroxy-2,3,5-trioxabicyclo[2.2.2]oct-7-en-6-one. Luciferase; part of the gene cluster that mediates the fungal bioluminescence cycle. Uses the fungal luciferin 3-hydroxyhispidin as a substrate to produce an endoperoxide as a high-energy intermediate with decomposition that yields oxyluciferin (also known as caffeoylpyruvate) and light emission. The fungal bioluminescence cycle begins with the hispidin synthetase that catalyzes the formation of hispidin which is further hydroxylated by the hispidin-3-hydroxylase, yielding the fungal luciferin 3-hydroxyhispidin. The luciferase then produces an endoperoxide as a high-energy intermediate with decomposition that yields oxyluciferin and light emission. Oxyluciferin can be recycled to caffeic acid by caffeoylpyruvate hydrolase. In Armillaria mellea (Honey mushroom), this protein is Luciferase.